Consider the following 116-residue polypeptide: MAKSSATKDAQALFHSLRSAYAATPTNLKIIDLYVIFAISTALIQVVYMAIVGSFPFNSFLSGVLSCIGTAVLAVCLRIQVNKENKEFKDLPPERAFADFVLCNLVLHLVIMNFLG.

At 1–32 the chain is on the cytoplasmic side; it reads MAKSSATKDAQALFHSLRSAYAATPTNLKIID. Residues 33–53 traverse the membrane as a helical segment; that stretch reads LYVIFAISTALIQVVYMAIVG. Topologically, residues 54 to 56 are lumenal; the sequence is SFP. The helical transmembrane segment at 57–77 threads the bilayer; sequence FNSFLSGVLSCIGTAVLAVCL. Topologically, residues 78–95 are cytoplasmic; the sequence is RIQVNKENKEFKDLPPER. A helical transmembrane segment spans residues 96–116; the sequence is AFADFVLCNLVLHLVIMNFLG.

This sequence belongs to the DAD/OST2 family. Component of the oligosaccharyltransferase (OST) complex.

Its subcellular location is the endoplasmic reticulum membrane. It functions in the pathway protein modification; protein glycosylation. Its function is as follows. Subunit of the oligosaccharyl transferase (OST) complex that catalyzes the initial transfer of a defined glycan (Glc(3)Man(9)GlcNAc(2) in eukaryotes) from the lipid carrier dolichol-pyrophosphate to an asparagine residue within an Asn-X-Ser/Thr consensus motif in nascent polypeptide chains, the first step in protein N-glycosylation. N-glycosylation occurs cotranslationally and the complex associates with the Sec61 complex at the channel-forming translocon complex that mediates protein translocation across the endoplasmic reticulum (ER). All subunits are required for a maximal enzyme activity. This chain is Dolichyl-diphosphooligosaccharide--protein glycosyltransferase subunit DAD1 (DAD1), found in Solanum lycopersicum (Tomato).